The following is a 1127-amino-acid chain: Caprin-2 (1127 aa).

The tract at residues 67–108 (YQSPSGHSEEEREGNMKSAKPQVNHSQHGESQRALSPLQSTL) is disordered. Positions 99 to 108 (RALSPLQSTL) are enriched in polar residues. Coiled coils occupy residues 129–156 (LKHK…GEHL) and 194–216 (AQKK…KLRT). Disordered stretches follow at residues 382–614 (NKQG…KDPV), 642–753 (DKPS…SSSV), and 922–975 (QCYK…PVDV). Basic and acidic residues-rich tracts occupy residues 402 to 432 (KRWD…HQEV) and 440 to 464 (EQRK…EISK). Polar residues-rich tracts occupy residues 512 to 531 (PKSW…SWTT) and 544 to 567 (TPKS…QISP). Residues 588–597 (LNTEPKDVPK) are compositionally biased toward basic and acidic residues. Composition is skewed to polar residues over residues 665 to 714 (KEQN…TSET) and 741 to 753 (QGFQ…SSSV). Phosphoserine is present on residues Ser948 and Ser949. Polar residues predominate over residues 956–970 (TFNSGDSGQGDSRSM). The 135-residue stretch at 993–1127 (PQQMRVAFSA…TFSGYLLYQD (135 aa)) folds into the C1q domain. Residues Asp1078 and Glu1084 each contribute to the Ca(2+) site.

It belongs to the caprin family. As to quaternary structure, homotrimer; via C1q domain. Found in a complex with LRP6, CCNY and CDK14 during G2/M stage; CAPRIN2 functions as a scaffold for the complex by binding to CCNY via its N terminus and to CDK14 via its C terminus. Interacts with LRP5. Interacts with LRP6. In terms of tissue distribution, detected in all tissues tested with highest levels of expression in brain and spleen.

It is found in the cytoplasm. Its subcellular location is the mitochondrion. The protein resides in the cell membrane. Its function is as follows. Promotes phosphorylation of the Wnt coreceptor LRP6, leading to increased activity of the canonical Wnt signaling pathway. Facilitates constitutive LRP6 phosphorylation by CDK14/CCNY during G2/M stage of the cell cycle, which may potentiate cells for Wnt signaling. May regulate the transport and translation of mRNAs, modulating for instance the expression of proteins involved in synaptic plasticity in neurons. Involved in regulation of growth as erythroblasts shift from a highly proliferative state towards their terminal phase of differentiation. May be involved in apoptosis. This Homo sapiens (Human) protein is Caprin-2.